The sequence spans 304 residues: GTPase Era (304 aa).

The 169-residue stretch at 11 to 179 (YCGFIAIVGR…QKIVRKSLRE (169 aa)) folds into the Era-type G domain. The G1 stretch occupies residues 19–26 (GRPNVGKS). 19 to 26 (GRPNVGKS) is a binding site for GTP. The interval 45–49 (QTTRH) is G2. The segment at 66 to 69 (DTPG) is G3. GTP contacts are provided by residues 66-70 (DTPGL) and 128-131 (NKVD). The interval 128–131 (NKVD) is G4. The interval 158-160 (ISA) is G5. Residues 210–287 (TGEELPYSVT…HLELWVKVKA (78 aa)) enclose the KH type-2 domain.

It belongs to the TRAFAC class TrmE-Era-EngA-EngB-Septin-like GTPase superfamily. Era GTPase family. In terms of assembly, monomer.

The protein resides in the cytoplasm. It localises to the cell inner membrane. Its function is as follows. An essential GTPase that binds both GDP and GTP, with rapid nucleotide exchange. Plays a role in 16S rRNA processing and 30S ribosomal subunit biogenesis and possibly also in cell cycle regulation and energy metabolism. This Actinobacillus pleuropneumoniae serotype 5b (strain L20) protein is GTPase Era.